We begin with the raw amino-acid sequence, 361 residues long: Ribosomal RNA large subunit methyltransferase M (361 aa).

Residues S187, 220-223 (CPGG), D239, D259, and D276 contribute to the S-adenosyl-L-methionine site. K305 acts as the Proton acceptor in catalysis.

This sequence belongs to the class I-like SAM-binding methyltransferase superfamily. RNA methyltransferase RlmE family. RlmM subfamily. As to quaternary structure, monomer.

The protein resides in the cytoplasm. The catalysed reaction is cytidine(2498) in 23S rRNA + S-adenosyl-L-methionine = 2'-O-methylcytidine(2498) in 23S rRNA + S-adenosyl-L-homocysteine + H(+). Its function is as follows. Catalyzes the 2'-O-methylation at nucleotide C2498 in 23S rRNA. The chain is Ribosomal RNA large subunit methyltransferase M from Shewanella putrefaciens (strain CN-32 / ATCC BAA-453).